The chain runs to 553 residues: Methyl-coenzyme M reductase II subunit alpha (553 aa).

Gln-150 provides a ligand contact to coenzyme F430. Coenzyme B is bound by residues Arg-228, 259–260 (KH), and Arg-273. A Pros-methylhistidine modification is found at His-260. Arg-274 bears the 5-methylarginine mark. Tyr-335 contacts coenzyme M. At Gln-402 the chain carries 2-methylglutamine. A coenzyme M-binding site is contributed by Tyr-446. Gly-447 is subject to 1-thioglycine. A (Z)-2,3-didehydroaspartate modification is found at Asp-452. S-methylcysteine is present on Cys-454.

It belongs to the methyl-coenzyme M reductase alpha subunit family. As to quaternary structure, MCR is a hexamer of two alpha, two beta, and two gamma chains, forming a dimer of heterotrimers. Requires coenzyme F430 as cofactor. In terms of processing, the alpha subunit contains six modified amino acids near the active site region. Is methylated on His-260, Arg-274, Gln-402 and Cys-454, probably by the action of specific S-adenosylmethionine-dependent methyltransferases. Also contains a thioglycine at position 447, forming a thiopeptide bond. Contains a didehydroaspartate residue at position 452. The methylation on C5 of Arg-274 is a post-translational methylation not essential in vivo, but which plays a role for the stability and structural integrity of MCR.

The catalysed reaction is coenzyme B + methyl-coenzyme M = methane + coenzyme M-coenzyme B heterodisulfide. The protein operates within one-carbon metabolism; methyl-coenzyme M reduction; methane from methyl-coenzyme M: step 1/1. Its function is as follows. Component of the methyl-coenzyme M reductase (MCR) I that catalyzes the reductive cleavage of methyl-coenzyme M (CoM-S-CH3 or 2-(methylthio)ethanesulfonate) using coenzyme B (CoB or 7-mercaptoheptanoylthreonine phosphate) as reductant which results in the production of methane and the mixed heterodisulfide of CoB and CoM (CoM-S-S-CoB). This is the final step in methanogenesis. This is Methyl-coenzyme M reductase II subunit alpha (mrtA) from Methanothermobacter marburgensis (strain ATCC BAA-927 / DSM 2133 / JCM 14651 / NBRC 100331 / OCM 82 / Marburg) (Methanobacterium thermoautotrophicum).